A 364-amino-acid polypeptide reads, in one-letter code: DNA polymerase IV (364 aa).

The 185-residue stretch at 14–198 (IIHIDMDAFF…LPIEKFHGVG (185 aa)) folds into the UmuC domain. Mg(2+) contacts are provided by Asp18 and Asp116. The active site involves Glu117.

This sequence belongs to the DNA polymerase type-Y family. In terms of assembly, monomer. It depends on Mg(2+) as a cofactor.

Its subcellular location is the cytoplasm. The enzyme catalyses DNA(n) + a 2'-deoxyribonucleoside 5'-triphosphate = DNA(n+1) + diphosphate. Functionally, poorly processive, error-prone DNA polymerase involved in untargeted mutagenesis. Copies undamaged DNA at stalled replication forks, which arise in vivo from mismatched or misaligned primer ends. These misaligned primers can be extended by PolIV. Exhibits no 3'-5' exonuclease (proofreading) activity. May be involved in translesional synthesis, in conjunction with the beta clamp from PolIII. In Streptococcus pyogenes serotype M28 (strain MGAS6180), this protein is DNA polymerase IV.